The chain runs to 186 residues: Elongation factor P (186 aa).

The protein belongs to the elongation factor P family.

The protein resides in the cytoplasm. It participates in protein biosynthesis; polypeptide chain elongation. Its function is as follows. Involved in peptide bond synthesis. Stimulates efficient translation and peptide-bond synthesis on native or reconstituted 70S ribosomes in vitro. Probably functions indirectly by altering the affinity of the ribosome for aminoacyl-tRNA, thus increasing their reactivity as acceptors for peptidyl transferase. The protein is Elongation factor P of Shewanella loihica (strain ATCC BAA-1088 / PV-4).